The chain runs to 140 residues: Encapsulated ferritin-like protein (140 aa).

Residue E31 participates in Ca(2+) binding. Residue E32 participates in Fe cation binding. E34 is a binding site for Ca(2+). The Fe cation site is built by E62 and H65. A disordered region spans residues 100 to 140; that stretch reads ADTAGEGSGGDAAKGATAQGDGSLGIGSLKGEAALARPPRL. The interval 100–140 is targeting peptide; it reads ADTAGEGSGGDAAKGATAQGDGSLGIGSLKGEAALARPPRL.

This sequence belongs to the ferritin-like superfamily. EncFtn family. As to quaternary structure, monomers form antiparallel dimers which assemble in a decameric ring 7 nm in diameter and 4.5 nm thick with a central channel (construct without targeting peptide). Growth in Fe(2+)-rich medium induces oligomerization, the monomer does not bind metals. The target peptide probably extends away from the ring, to allow binding to the interior of the encapsulin nanocompartment shell. It depends on Fe(2+) as a cofactor. Ca(2+) is required as a cofactor.

The protein localises to the encapsulin nanocompartment. The catalysed reaction is 4 Fe(2+) + O2 + 4 H(+) = 4 Fe(3+) + 2 H2O. Ferroxidase activity inhibited by Zn(2+). Mutants at Glu-31, Glu-34 and Trp-38 are also inhibited by Zn(2+). In terms of biological role, cargo protein of a type 1 encapsulin nanocompartment. A ferritin-like ferroxidase that mineralizes iron inside the encapsulin nanocompartment. Converts Fe(2+) to Fe(3+) that is released to the exterior of the decameric complex for deposition in the encapsulin nanocompartment. In solution the decamer binds 10-15 iron cations; in the encapsulin nanocompartment the decamer can bind up to 48 ions, perhaps via its internal channel and on its exterior. The empty encapsulin nanocompartment sequesters about 2200 Fe ions while the cargo-loaded nanocompartment can maximally sequester about 4150 Fe ions. EncFtn retains ferroxidase activity when encapsulated. Flux in the active site di-iron metal center is thought to be controlled by the 'entry site' of the protein, which both attracts metal and controls the rate of iron oxidation. Encapsulation in the nanocompartment does not alter either function of this protein. This Rhodospirillum rubrum (strain ATCC 11170 / ATH 1.1.1 / DSM 467 / LMG 4362 / NCIMB 8255 / S1) protein is Encapsulated ferritin-like protein.